We begin with the raw amino-acid sequence, 1240 residues long: DNA excision repair protein ERCC-6-like (1240 aa).

Ser-14 bears the Phosphoserine mark. A TPR 1 repeat occupies 21-54; it reads YLRYVQEAKEAAKNGDLEESLKLFNLAKDIFPTK. Residues 110–278 form the Helicase ATP-binding domain; that stretch reads SLYKDGRKGG…WSLFDFACQG (169 aa). 123-130 contacts ATP; the sequence is DDMGLGKT. Residues 229–232 carry the DEAH box motif; sequence DEAH. The Helicase C-terminal domain maps to 467–631; the sequence is FLMSLLERLQ…FTKQELKELF (165 aa). The tract at residues 736–760 is disordered; it reads FPSQQKKKGTEFNKPQPQPSRLLTK. Positions 748 to 760 are enriched in polar residues; that stretch reads NKPQPQPSRLLTK. 2 positions are modified to phosphoserine: Ser-755 and Ser-773. The disordered stretch occupies residues 778 to 813; sequence DQSAESEPQEHSEVHDVTSLQGSHHFNSTSDAGTIA. A compositionally biased stretch (polar residues) spans 795–809; that stretch reads TSLQGSHHFNSTSDA. Position 821 is a phosphoserine (Ser-821). Positions 845–879 are disordered; sequence QKKGLQASPGQEAPSENLGSFHYLPRESSKASLGP. Residues Ser-966, Ser-998, Ser-1001, and Ser-1021 each carry the phosphoserine modification. Residues 974–1085 are disordered; it reads KEKSLQSPAA…EVNTSLHSRR (112 aa). Residues 978–998 show a composition bias toward polar residues; the sequence is LQSPAANSRAKSALTLSLDSS. Residues 1049–1065 are compositionally biased toward polar residues; the sequence is SVKQFDASTPQSGSNPS. The residue at position 1057 (Thr-1057) is a Phosphothreonine. 2 positions are modified to phosphoserine: Ser-1092 and Ser-1112. Positions 1104–1117 are enriched in acidic residues; that stretch reads MEERLDNSSEEESE. The interval 1104–1185 is disordered; it reads MEERLDNSSE…MPDPPQDLAV (82 aa). Polar residues predominate over residues 1135-1165; that stretch reads EQPSGATLASGNKSSNLTMSEPTSPAPQSSP. At Ser-1172 the chain carries Phosphoserine. Residues 1191–1224 form a TPR 2 repeat; the sequence is YESLVARGKELKECGKIQEALNCLVKALDIKSAD.

It belongs to the SNF2/RAD54 helicase family. As to quaternary structure, interacts with PLK1, which phosphorylates it. Both proteins are mutually dependent on each other for correct subcellular localization. Interacts (via N-terminal TPR repeat) with BEND3 (via BEN domains 1 and 3); the interaction is direct. In terms of processing, phosphorylation by PLK1 prevents the association with chromosome arms and restricts its localization to the kinetochore-centromere region. Expressed mainly in the neural tube and heart of 10.5 dpc embryo. Significantly down-regulated after alcohol exposure in embryonic brain and heart, but not in embryonic kidney, liver, or lung.

It localises to the chromosome. The protein localises to the centromere. It is found in the kinetochore. It catalyses the reaction ATP + H2O = ADP + phosphate + H(+). In terms of biological role, DNA helicase that acts as a tension sensor that associates with catenated DNA which is stretched under tension until it is resolved during anaphase. Functions as ATP-dependent DNA translocase. Can promote Holliday junction branch migration (in vitro). The chain is DNA excision repair protein ERCC-6-like (Ercc6l) from Mus musculus (Mouse).